Here is a 618-residue protein sequence, read N- to C-terminus: Protein polyglycylase TTLL10 (618 aa).

Positions 1–76 (MGSSQEEGLP…GLLLGDGKPS (76 aa)) are disordered. A compositionally biased stretch (low complexity) spans 57 to 74 (ATGPPAALLEGLLLGDGK). One can recognise a TTL domain in the interval 82-479 (PGPFFYIGGN…TFQKSLRGQK (398 aa)). ATP-binding positions include Lys-240, 246 to 247 (QG), 289 to 292 (QRYI), 302 to 304 (KFD), and 345 to 346 (TN). Position 246 (Gln-246) interacts with a protein. Mg(2+) is bound by residues Asp-425, Glu-438, and Asn-440. Positions 503-618 (LGGSCSLRRR…PATLPAFRDL (116 aa)) are disordered. The span at 539 to 557 (PVPPPLAPQRPQLPGPSPD) shows a compositional bias: pro residues. The segment covering 585 to 594 (AKEEREEPEN) has biased composition (basic and acidic residues).

Requires Mg(2+) as cofactor.

It is found in the cytoplasm. Its subcellular location is the cytoskeleton. The protein localises to the cell projection. It localises to the cilium. The protein resides in the cilium axoneme. It catalyses the reaction (glycyl)(n)-glycyl-L-glutamyl-[protein] + glycine + ATP = (glycyl)(n+1)-glycyl-L-glutamyl-[protein] + ADP + phosphate + H(+). In terms of biological role, polyglycylase which modifies both tubulin and non-tubulin proteins, generating polyglycine side chains of variable lengths on the gamma-carboxyl groups of specific glutamate residues of target proteins. Involved in the elongation step rather than the initiation step of the polyglycylation reaction. Polyglycylates alpha-tubulin and beta-tubulin. Polyglycylates non-tubulin proteins such as nucleosome assembly protein NAP1. The polypeptide is Protein polyglycylase TTLL10 (TTLL10) (Macaca fascicularis (Crab-eating macaque)).